The primary structure comprises 205 residues: Ras-related protein Rab-18-B (205 aa).

Residues Ser17, Gly20, Lys21, Ser22, Ser23, Asp34, Pro35, Thr40, Gly66, Lys123, Asp125, and Ala152 each coordinate GTP. Position 22 (Ser22) interacts with Mg(2+). Short sequence motifs (switch) lie at residues 31 to 45 and 63 to 80; these read DTFDPELAATIGVDF and DTAGQERFRTLTPSYYRG. Thr40 is a binding site for Mg(2+). A lipid anchor (S-palmitoyl cysteine) is attached at Cys198. The residue at position 202 (Cys202) is a Cysteine methyl ester. A lipid anchor (S-geranylgeranyl cysteine) is attached at Cys202. Residues 203–205 constitute a propeptide, removed in mature form; that stretch reads SLV.

Belongs to the small GTPase superfamily. Rab family. The cofactor is Mg(2+).

It localises to the endoplasmic reticulum membrane. The protein resides in the golgi apparatus. It is found in the cis-Golgi network membrane. The protein localises to the lipid droplet. Its subcellular location is the apical cell membrane. The catalysed reaction is GTP + H2O = GDP + phosphate + H(+). Its activity is regulated as follows. Regulated by guanine nucleotide exchange factors (GEFs) which promote the exchange of bound GDP for free GTP. Regulated by GTPase activating proteins (GAPs) which increase the GTP hydrolysis activity at the ER membrane. Inhibited by GDP dissociation inhibitors (GDIs) which prevent Rab-GDP dissociation. The small GTPases Rab are key regulators of intracellular membrane trafficking, from the formation of transport vesicles to their fusion with membranes. Rabs cycle between an inactive GDP-bound form and an active GTP-bound form that is able to recruit to membranes different sets of downstream effectors directly responsible for vesicle formation, movement, tethering and fusion. Required for the localization of ZFYVE1 to lipid droplets and for its function in mediating the formation of endoplasmic reticulum-lipid droplets (ER-LD) contacts. Also required for maintaining endoplasmic reticulum structure. Plays a role in apical endocytosis/recycling. Plays a key role in eye and brain development and neurodegeneration. This Danio rerio (Zebrafish) protein is Ras-related protein Rab-18-B (rab18b).